Consider the following 797-residue polypeptide: Protocadherin beta-9 (797 aa).

Residues 1 to 26 (MKTRGFSFPRQRQVLFLFLFWGVSLA) form the signal peptide. At 27-690 (GSGFGRYSVT…AQADSLTVYL (664 aa)) the chain is on the extracellular side. 5 Cadherin domains span residues 35–133 (VTEE…SPVF), 138–242 (MVLK…APQF), 247–347 (YETQ…PPEL), 352–451 (LSNS…APAF), and 456–561 (YTLF…SPFV). Asn169 carries an N-linked (GlcNAc...) asparagine glycan. A glycan (N-linked (GlcNAc...) asparagine) is linked at Asn418. N-linked (GlcNAc...) asparagine glycosylation occurs at Asn567. Residues 568 to 671 (GSAPCTELVP…LVDGFSQPYL (104 aa)) form the Cadherin 6 domain. Residues 691-711 (VVALASVSSLFLLSVLLFVAV) form a helical membrane-spanning segment. Over 712 to 797 (RLCRRSRAAS…TLHNSFGFNY (86 aa)) the chain is Cytoplasmic.

The protein localises to the cell membrane. Potential calcium-dependent cell-adhesion protein. May be involved in the establishment and maintenance of specific neuronal connections in the brain. This is Protocadherin beta-9 (PCDHB9) from Pan troglodytes (Chimpanzee).